Reading from the N-terminus, the 179-residue chain is Large ribosomal subunit protein bL25 (179 aa).

The protein belongs to the bacterial ribosomal protein bL25 family. CTC subfamily. In terms of assembly, part of the 50S ribosomal subunit; part of the 5S rRNA/L5/L18/L25 subcomplex. Contacts the 5S rRNA. Binds to the 5S rRNA independently of L5 and L18.

Functionally, this is one of the proteins that binds to the 5S RNA in the ribosome where it forms part of the central protuberance. This chain is Large ribosomal subunit protein bL25, found in Desulfitobacterium hafniense (strain DSM 10664 / DCB-2).